The sequence spans 333 residues: Ferrochelatase (333 aa).

Residues histidine 202 and glutamate 284 each contribute to the Fe cation site.

Belongs to the ferrochelatase family.

The protein resides in the cytoplasm. The catalysed reaction is heme b + 2 H(+) = protoporphyrin IX + Fe(2+). It participates in porphyrin-containing compound metabolism; protoheme biosynthesis; protoheme from protoporphyrin-IX: step 1/1. Its function is as follows. Catalyzes the ferrous insertion into protoporphyrin IX. The protein is Ferrochelatase of Francisella tularensis subsp. mediasiatica (strain FSC147).